Here is a 63-residue protein sequence, read N- to C-terminus: Large ribosomal subunit protein uL29 (63 aa).

This sequence belongs to the universal ribosomal protein uL29 family.

This Glaesserella parasuis serovar 5 (strain SH0165) (Haemophilus parasuis) protein is Large ribosomal subunit protein uL29.